The sequence spans 305 residues: Olfactory receptor 5M11 (305 aa).

The Extracellular segment spans residues Met1–Ser25. Asn5 is a glycosylation site (N-linked (GlcNAc...) asparagine). The chain crosses the membrane as a helical span at residues Leu26–Ile46. The Cytoplasmic portion of the chain corresponds to Met47 to Arg54. Residues Leu55–Ser75 form a helical membrane-spanning segment. Over Asn76 to Thr98 the chain is Extracellular. A disulfide bridge connects residues Cys96 and Cys188. The chain crosses the membrane as a helical span at residues Gln99 to Tyr119. Topologically, residues Asp120–Arg138 are cytoplasmic. The chain crosses the membrane as a helical span at residues Val139–Ala159. Residues Ile160–Glu195 lie on the Extracellular side of the membrane. A helical membrane pass occupies residues His196–Ser216. Over Tyr217 to Ala236 the chain is Cytoplasmic. Residues Phe237–Met257 traverse the membrane as a helical segment. The Extracellular portion of the chain corresponds to Tyr258–Ser270. A helical transmembrane segment spans residues Lys271 to Leu291. At Arg292–Arg305 the chain is on the cytoplasmic side.

This sequence belongs to the G-protein coupled receptor 1 family.

It is found in the cell membrane. In terms of biological role, odorant receptor. This Homo sapiens (Human) protein is Olfactory receptor 5M11 (OR5M11).